Consider the following 2435-residue polypeptide: ATP-binding cassette sub-family A member 2 (2435 aa).

Asn-14 carries an N-linked (GlcNAc...) asparagine glycan. Helical transmembrane passes span 22–42 and 54–74; these read PWVL…LLGL and AFYT…QSLC. N-linked (GlcNAc...) asparagine glycosylation is found at Asn-89, Asn-168, and Asn-173. An N5-methylglutamine modification is found at Gln-271. Asn-305, Asn-368, Asn-379, Asn-420, Asn-432, Asn-476, Asn-484, Asn-494, Asn-530, Asn-544, Asn-590, Asn-600, and Asn-628 each carry an N-linked (GlcNAc...) asparagine glycan. 6 consecutive transmembrane segments (helical) span residues 699–719, 750–770, 782–802, 813–833, 857–877, and 893–913; these read FLFV…VYSV, VAWF…LTAI, VVII…FCFL, ASAC…YVAI, AFGL…GIQW, and LLAV…TWYI. The ABC transporter 1 domain maps to 990–1221; it reads VCVDKLTKVY…YGDGYRLTLV (232 aa). 1024–1031 lines the ATP pocket; that stretch reads GHNGAGKT. 2 disordered regions span residues 1223–1243 and 1325–1357; these read RPAE…PGRA and DQSL…GHAG. Residues Ser-1238, Ser-1327, and Ser-1331 each carry the phosphoserine modification. The span at 1333-1342 shows a compositional bias: basic and acidic residues; the sequence is ADVKESRKDV. A glycan (N-linked (GlcNAc...) asparagine) is linked at Asn-1408. A helical membrane pass occupies residues 1456–1476; sequence ALFSQILLPAFFVCVAMTVAL. 3 N-linked (GlcNAc...) asparagine glycosylation sites follow: Asn-1496, Asn-1549, and Asn-1557. Residues 1586–1610 are disordered; that stretch reads SNFVPPPPSPAPSDSPASPDEDLQA. A compositionally biased stretch (pro residues) spans 1589–1598; that stretch reads VPPPPSPAPS. N-linked (GlcNAc...) asparagine glycosylation is found at Asn-1612, Asn-1677, and Asn-1775. The next 5 membrane-spanning stretches (helical) occupy residues 1792–1812, 1841–1861, 1872–1892, 1905–1925, and 1991–2011; these read VVIA…FVVF, VWDM…LFVF, FPAV…IMYP, VFLI…TFLL, and GLVA…MCQY. The region spanning 2050–2285 is the ABC transporter 2 domain; the sequence is VKIENLTKVY…FGDGYMITVR (236 aa). Asn-2054 is a glycosylation site (N-linked (GlcNAc...) asparagine). Position 2087 to 2094 (2087 to 2094) interacts with ATP; it reads GVNGAGKT. Position 2412 is a phosphothreonine (Thr-2412).

This sequence belongs to the ABC transporter superfamily. ABCA family. In terms of processing, methylated at Gln-271 by N6AMT1. As to expression, highly expressed in the brain,peripheral blood leukocytes and ovary, whereas lower levels of expression is observed in kidney and liver. In terms of tissue distribution, weakly expressed in brain and highly in peripheral blood leukocytes.

Its subcellular location is the endosome membrane. The protein localises to the lysosome membrane. Its function is as follows. Probable lipid transporter that modulates cholesterol sequestration in the late endosome/lysosome by regulating the intracellular sphingolipid metabolism, in turn participates in cholesterol homeostasis. May alter the transbilayer distribution of ceramide in the intraluminal membrane lipid bilayer, favoring its retention in the outer leaflet that results in increased acid ceramidase activity in the late endosome/lysosome, facilitating ceramide deacylation to sphingosine leading to the sequestration of free cholesterol in lysosomes. In addition regulates amyloid-beta production either by activating a signaling pathway that regulates amyloid precursor protein transcription through the modulation of sphingolipid metabolism or through its role in gamma-secretase processing of APP. May play a role in myelin formation. This chain is ATP-binding cassette sub-family A member 2, found in Homo sapiens (Human).